The primary structure comprises 323 residues: Annexin A5 (323 aa).

Annexin repeat units lie at residues 17 to 88, 89 to 160, 172 to 244, and 248 to 319; these read FNDK…ALMV, PAHL…SLVQ, GQVE…AVVK, and SIQG…LLCG.

The protein belongs to the annexin family.

Calcium/phospholipid-binding protein which promotes membrane fusion and is involved in exocytosis. The sequence is that of Annexin A5 from Cynops pyrrhogaster (Japanese fire-bellied newt).